Reading from the N-terminus, the 193-residue chain is MESQNKASLPVMDGLERRVVASQSEGASTCDLLLRVLALVLTLAAAIVLGVDKQTKVVPIKIVDTLPAINLPVSAKWHYLSAFTYSVASNAIACSYAALSLVLAVSGKKGIMSIVIVLDLLMVAMLFSSNGAALAIGLMGYQGNSHVRWTKVCHVFGRFCNQVAVSISLSLLGSILFLLLVGITSLRLHKKSK.

The Cytoplasmic portion of the chain corresponds to 1–30 (MESQNKASLPVMDGLERRVVASQSEGASTC). Residues 31–51 (DLLLRVLALVLTLAAAIVLGV) traverse the membrane as a helical segment. The Extracellular segment spans residues 52-86 (DKQTKVVPIKIVDTLPAINLPVSAKWHYLSAFTYS). The chain crosses the membrane as a helical span at residues 87 to 107 (VASNAIACSYAALSLVLAVSG). The Cytoplasmic portion of the chain corresponds to 108–113 (KKGIMS). Residues 114 to 134 (IVIVLDLLMVAMLFSSNGAAL) traverse the membrane as a helical segment. Over 135–162 (AIGLMGYQGNSHVRWTKVCHVFGRFCNQ) the chain is Extracellular. The helical transmembrane segment at 163-183 (VAVSISLSLLGSILFLLLVGI) threads the bilayer. The Cytoplasmic segment spans residues 184 to 193 (TSLRLHKKSK).

Belongs to the Casparian strip membrane proteins (CASP) family. As to quaternary structure, homodimer and heterodimers.

The protein resides in the cell membrane. The sequence is that of CASP-like protein 1E1 from Populus trichocarpa (Western balsam poplar).